We begin with the raw amino-acid sequence, 486 residues long: Glutamyl-tRNA(Gln) amidotransferase subunit A (486 aa).

Active-site charge relay system residues include Lys74 and Ser149. The active-site Acyl-ester intermediate is the Ser173.

It belongs to the amidase family. GatA subfamily. Heterotrimer of A, B and C subunits.

It catalyses the reaction L-glutamyl-tRNA(Gln) + L-glutamine + ATP + H2O = L-glutaminyl-tRNA(Gln) + L-glutamate + ADP + phosphate + H(+). Allows the formation of correctly charged Gln-tRNA(Gln) through the transamidation of misacylated Glu-tRNA(Gln) in organisms which lack glutaminyl-tRNA synthetase. The reaction takes place in the presence of glutamine and ATP through an activated gamma-phospho-Glu-tRNA(Gln). This chain is Glutamyl-tRNA(Gln) amidotransferase subunit A, found in Prochlorococcus marinus (strain SARG / CCMP1375 / SS120).